A 215-amino-acid chain; its full sequence is Outer-membrane lipoprotein carrier protein (215 aa).

Positions 1–24 are cleaved as a signal peptide; sequence MFVLKARHLMAAGLVSLAAWSAGA.

The protein belongs to the LolA family. Monomer.

Its subcellular location is the periplasm. Functionally, participates in the translocation of lipoproteins from the inner membrane to the outer membrane. Only forms a complex with a lipoprotein if the residue after the N-terminal Cys is not an aspartate (The Asp acts as a targeting signal to indicate that the lipoprotein should stay in the inner membrane). The protein is Outer-membrane lipoprotein carrier protein of Ralstonia nicotianae (strain ATCC BAA-1114 / GMI1000) (Ralstonia solanacearum).